Here is a 337-residue protein sequence, read N- to C-terminus: Ornithine carbamoyltransferase, catabolic (337 aa).

Residues 57-60, Gln84, Arg108, and 135-138 contribute to the carbamoyl phosphate site; these read STRT and HPTQ. Residues Asn167, Asp231, and 235–236 contribute to the L-ornithine site; that span reads SM. Residues 272–273 and Arg317 each bind carbamoyl phosphate; that span reads CL.

Belongs to the aspartate/ornithine carbamoyltransferase superfamily. OTCase family.

It is found in the cytoplasm. It catalyses the reaction carbamoyl phosphate + L-ornithine = L-citrulline + phosphate + H(+). It participates in amino-acid degradation; L-arginine degradation via ADI pathway; carbamoyl phosphate from L-arginine: step 2/2. Functionally, reversibly catalyzes the transfer of the carbamoyl group from carbamoyl phosphate (CP) to the N(epsilon) atom of ornithine (ORN) to produce L-citrulline. In Streptococcus pyogenes serotype M1, this protein is Ornithine carbamoyltransferase, catabolic (arcB).